Reading from the N-terminus, the 303-residue chain is Porphobilinogen deaminase (303 aa).

Cys-240 is modified (S-(dipyrrolylmethanemethyl)cysteine).

It belongs to the HMBS family. In terms of assembly, monomer. Dipyrromethane serves as cofactor.

The enzyme catalyses 4 porphobilinogen + H2O = hydroxymethylbilane + 4 NH4(+). The protein operates within porphyrin-containing compound metabolism; protoporphyrin-IX biosynthesis; coproporphyrinogen-III from 5-aminolevulinate: step 2/4. In terms of biological role, tetrapolymerization of the monopyrrole PBG into the hydroxymethylbilane pre-uroporphyrinogen in several discrete steps. The polypeptide is Porphobilinogen deaminase (Stenotrophomonas maltophilia (strain K279a)).